Consider the following 95-residue polypeptide: Large ribosomal subunit protein bL25 (95 aa).

It belongs to the bacterial ribosomal protein bL25 family. In terms of assembly, part of the 50S ribosomal subunit; part of the 5S rRNA/L5/L18/L25 subcomplex. Contacts the 5S rRNA. Binds to the 5S rRNA independently of L5 and L18.

This is one of the proteins that binds to the 5S RNA in the ribosome where it forms part of the central protuberance. This is Large ribosomal subunit protein bL25 from Shewanella pealeana (strain ATCC 700345 / ANG-SQ1).